The following is an 831-amino-acid chain: Cadherin-related family member 5 (831 aa).

Positions 1–28 (MGAPALLWPSLLLPWLTVLFGQPPGTLA) are cleaved as a signal peptide. Over 29-641 (QTQVCSVNQT…GQRFSTVDMA (613 aa)) the chain is Extracellular. Residues Asn36, Asn45, Asn84, Asn135, Asn143, Asn173, Asn201, Asn287, Asn311, Asn408, and Asn475 are each glycosylated (N-linked (GlcNAc...) asparagine). Cadherin domains are found at residues 53–125 (VNIF…DNAP), 128–240 (SFEI…TPWF), 252–357 (IHAQ…PLQF), and 358–459 (SQSL…ERER). The interval 452 to 632 (IQVSERERTP…STGAGEQGDG (181 aa)) is disordered. Polar residues predominate over residues 473–491 (SSNTTMEAPLTSGTSQRPA). The span at 505-540 (GGTTLRPPTPASSIPGGSPTLGTSTSPQTTTPGGDS) shows a compositional bias: low complexity. Residues 541–554 (AQTPKPGTSHPTAP) are compositionally biased toward polar residues. Repeat copies occupy residues 541–571 (AQTP…RSDS) and 572–602 (TQTP…SGSS). The segment at 541 to 614 (AQTPKPGTSH…TPKPGTSQST (74 aa)) is 3 X 31 AA approximate tandem repeats. Over residues 555–572 (TSRTSTSLMTTSSRSDST) the composition is skewed to low complexity. Composition is skewed to polar residues over residues 573–582 (QTPKPGTSQP) and 589–623 (ASTS…SLPS). A 3; truncated repeat occupies 605 to 614 (TPKPGTSQST). The chain crosses the membrane as a helical span at residues 642–662 (VLGGVLGALLLLALICLVILV). Over 663–831 (HKHYRHRLAC…FGVDADNTYI (169 aa)) the chain is Cytoplasmic. The tract at residues 663–831 (HKHYRHRLAC…FGVDADNTYI (169 aa)) is mediates interaction with USH1C and MYO7B and is required for proper localization to microvilli tips and function in microvilli organization. 2 disordered regions span residues 675-774 (GKAS…GGYK) and 793-831 (EPTA…NTYI). Phosphoserine occurs at positions 699, 721, and 725. Over residues 716 to 738 (PLRPPSPMSSSPTPPSSTPPSPQ) the composition is skewed to pro residues. A Phosphothreonine modification is found at Thr728. Ser736 and Ser753 each carry phosphoserine. Residues 761 to 771 (LTKERRPEGEG) show a composition bias toward basic and acidic residues. Position 795 is a phosphothreonine (Thr795). The span at 797–807 (DVDSASASGSE) shows a compositional bias: low complexity. Residues Ser802, Ser804, and Ser806 each carry the phosphoserine modification.

As to quaternary structure, part of the IMAC/intermicrovillar adhesion complex/intermicrovillar tip-link complex composed of ANKS4B, MYO7B, USH1C, CDHR2 and CDHR5. Interacts (via cytoplasmic domain) with USH1C and MYO7B; required for proper localization of CDHR5 to microvilli tips and its function in brush border differentiation. N- and O-glycosylated.

It is found in the apical cell membrane. It localises to the cell projection. Its subcellular location is the microvillus membrane. Its function is as follows. Intermicrovillar adhesion molecule that forms, via its extracellular domain, calcium-dependent heterophilic complexes with CDHR2 on adjacent microvilli. Thereby, controls the packing of microvilli at the apical membrane of epithelial cells. Through its cytoplasmic domain, interacts with microvillus cytoplasmic proteins to form the intermicrovillar adhesion complex/IMAC. This complex plays a central role in microvilli and epithelial brush border differentiation. The polypeptide is Cadherin-related family member 5 (Mus musculus (Mouse)).